The primary structure comprises 101 residues: uncharacterized protein (101 aa).

The segment covering 65–79 (QEAAAPAGPQEPAEA) has biased composition (low complexity). A disordered region spans residues 65 to 101 (QEAAAPAGPQEPAEASGDAGKKEEVEEEEIEIDFGMF). The segment covering 89–101 (VEEEEIEIDFGMF) has biased composition (acidic residues).

This is an uncharacterized protein from Encephalitozoon cuniculi (strain GB-M1) (Microsporidian parasite).